The sequence spans 87 residues: DNA-directed RNA polymerase subunit omega (87 aa).

The protein belongs to the RNA polymerase subunit omega family. In terms of assembly, the RNAP catalytic core consists of 2 alpha, 1 beta, 1 beta' and 1 omega subunit. When a sigma factor is associated with the core the holoenzyme is formed, which can initiate transcription.

The enzyme catalyses RNA(n) + a ribonucleoside 5'-triphosphate = RNA(n+1) + diphosphate. Its function is as follows. Promotes RNA polymerase assembly. Latches the N- and C-terminal regions of the beta' subunit thereby facilitating its interaction with the beta and alpha subunits. The polypeptide is DNA-directed RNA polymerase subunit omega (Azotobacter vinelandii (strain DJ / ATCC BAA-1303)).